The primary structure comprises 80 residues: Dermaseptin-A5 (80 aa).

The N-terminal stretch at 1–22 is a signal peptide; the sequence is MAFLKKSLFLVLFLGLVSLSIC. A propeptide spanning residues 23 to 43 is cleaved from the precursor; sequence EEEKRENEDEEEQEDDEQSEM. The tract at residues 24–45 is disordered; it reads EEKRENEDEEEQEDDEQSEMKR. Residues 30–40 are compositionally biased toward acidic residues; sequence EDEEEQEDDEQ. Val77 bears the Valine amide mark. Positions 79–80 are excised as a propeptide; sequence EQ.

The protein belongs to the frog skin active peptide (FSAP) family. Dermaseptin subfamily. As to expression, expressed by the skin glands.

It is found in the secreted. In terms of biological role, possesses a potent antimicrobial activity against Gram-positive and Gram-negative bacteria. Probably acts by disturbing membrane functions with its amphipathic structure. This Agalychnis annae (Blue-sided leaf frog) protein is Dermaseptin-A5.